The primary structure comprises 1199 residues: Putative mitoferrin (1199 aa).

The helical transmembrane segment at 32 to 52 (VPLWQHIFCGSIAGLMEHVFM) threads the bilayer. 13 N-linked (GlcNAc...) asparagine glycosylation sites follow: asparagine 92, asparagine 171, asparagine 208, asparagine 268, asparagine 326, asparagine 353, asparagine 443, asparagine 499, asparagine 539, asparagine 649, asparagine 708, asparagine 715, and asparagine 723. The chain crosses the membrane as a helical span at residues 730–750 (GVNVVVLGCIPAHALYFSTFE). N-linked (GlcNAc...) asparagine glycosylation is found at asparagine 763 and asparagine 772. The stretch at 792–873 (LNYFSIAVSG…ICTNEKMKKI (82 aa)) is one Solcar 1 repeat. The next 2 membrane-spanning stretches (helical) occupy residues 795-815 (FSIA…ITPI) and 845-865 (LYLS…IMIC). Residues asparagine 914, asparagine 922, asparagine 965, asparagine 1013, asparagine 1022, asparagine 1041, and asparagine 1056 are each glycosylated (N-linked (GlcNAc...) asparagine). The stretch at 1109–1191 (SYFVCAGIGG…WGTYETMKRF (83 aa)) is one Solcar 2 repeat. Residues 1111–1131 (FVCAGIGGGIAAVLTNPLDVI) traverse the membrane as a helical segment.

Belongs to the mitochondrial carrier (TC 2.A.29) family.

The protein resides in the mitochondrion membrane. Functionally, putative iron transporter. This Plasmodium falciparum (isolate 3D7) protein is Putative mitoferrin.